A 557-amino-acid chain; its full sequence is CTP synthase (557 aa).

The tract at residues 1-272 (MARSKIVKHI…DSLVLKKLML (272 aa)) is amidoligase domain. Residue serine 18 coordinates CTP. Serine 18 serves as a coordination point for UTP. 19–24 (SLGKGI) lines the ATP pocket. Tyrosine 59 lines the L-glutamine pocket. Aspartate 76 is an ATP binding site. Mg(2+) contacts are provided by aspartate 76 and glutamate 146. Residues 153–155 (DIE), 193–198 (KTKPTQ), and lysine 229 contribute to the CTP site. UTP is bound by residues 193 to 198 (KTKPTQ) and lysine 229. In terms of domain architecture, Glutamine amidotransferase type-1 spans 299-543 (EIGVCGKYTK…VAEAKKFRDE (245 aa)). L-glutamine is bound at residue glycine 363. The Nucleophile; for glutamine hydrolysis role is filled by cysteine 390. Residues 391-394 (LGMQ), glutamate 414, and arginine 471 contribute to the L-glutamine site. Catalysis depends on residues histidine 516 and glutamate 518.

This sequence belongs to the CTP synthase family. Homotetramer.

The catalysed reaction is UTP + L-glutamine + ATP + H2O = CTP + L-glutamate + ADP + phosphate + 2 H(+). The enzyme catalyses L-glutamine + H2O = L-glutamate + NH4(+). It carries out the reaction UTP + NH4(+) + ATP = CTP + ADP + phosphate + 2 H(+). It functions in the pathway pyrimidine metabolism; CTP biosynthesis via de novo pathway; CTP from UDP: step 2/2. With respect to regulation, allosterically activated by GTP, when glutamine is the substrate; GTP has no effect on the reaction when ammonia is the substrate. The allosteric effector GTP functions by stabilizing the protein conformation that binds the tetrahedral intermediate(s) formed during glutamine hydrolysis. Inhibited by the product CTP, via allosteric rather than competitive inhibition. In terms of biological role, catalyzes the ATP-dependent amination of UTP to CTP with either L-glutamine or ammonia as the source of nitrogen. Regulates intracellular CTP levels through interactions with the four ribonucleotide triphosphates. This Chloroherpeton thalassium (strain ATCC 35110 / GB-78) protein is CTP synthase.